Here is a 361-residue protein sequence, read N- to C-terminus: Probable dual-specificity RNA methyltransferase RlmN (361 aa).

Glu-91 (proton acceptor) is an active-site residue. Residues 97-335 form the Radical SAM core domain; the sequence is QHYGLSVCVT…CVVRQEHGTD (239 aa). A disulfide bond links Cys-104 and Cys-340. [4Fe-4S] cluster-binding residues include Cys-111, Cys-115, and Cys-118. S-adenosyl-L-methionine is bound by residues 163-164, Ser-195, 218-220, and Asn-296; these read GE and SLH. Cys-340 acts as the S-methylcysteine intermediate in catalysis.

Belongs to the radical SAM superfamily. RlmN family. Requires [4Fe-4S] cluster as cofactor.

It localises to the cytoplasm. It carries out the reaction adenosine(2503) in 23S rRNA + 2 reduced [2Fe-2S]-[ferredoxin] + 2 S-adenosyl-L-methionine = 2-methyladenosine(2503) in 23S rRNA + 5'-deoxyadenosine + L-methionine + 2 oxidized [2Fe-2S]-[ferredoxin] + S-adenosyl-L-homocysteine. The enzyme catalyses adenosine(37) in tRNA + 2 reduced [2Fe-2S]-[ferredoxin] + 2 S-adenosyl-L-methionine = 2-methyladenosine(37) in tRNA + 5'-deoxyadenosine + L-methionine + 2 oxidized [2Fe-2S]-[ferredoxin] + S-adenosyl-L-homocysteine. Specifically methylates position 2 of adenine 2503 in 23S rRNA and position 2 of adenine 37 in tRNAs. This chain is Probable dual-specificity RNA methyltransferase RlmN, found in Streptococcus mutans serotype c (strain ATCC 700610 / UA159).